The chain runs to 5054 residues: Malformin synthetase mlfA (5054 aa).

The interval 194–585 (ERRAANRPHS…CGRADTQVKL (392 aa)) is adenylation 1. Residues 723–799 (LGLSQLEQEI…EASSLAEVQE (77 aa)) form the Carrier 1 domain. Ser760 is modified (O-(pantetheine 4'-phosphoryl)serine). A condensation 1 region spans residues 837–1268 (EDVFPCTTMQ…ALNTLTLLQA (432 aa)). The adenylation 2 stretch occupies residues 1296–1685 (DRWVTRQPES…GRKDTQVKLR (390 aa)). A Carrier 2 domain is found at 1823–1900 (TASSKLELTL…QLAAILGEAT (78 aa)). At Ser1860 the chain carries O-(pantetheine 4'-phosphoryl)serine. Disordered regions lie at residues 1899-1929 (ATGQ…NDGV) and 1964-1994 (GSSS…VSPV). Low complexity-rich tracts occupy residues 1904-1927 (ESSA…STND) and 1965-1981 (SSSC…SSSS). The tract at residues 2033–2448 (EDIYPATALQ…GVSYRDKQTL (416 aa)) is condensation 2. The interval 2471–2863 (VRTPHAPAVF…IGRRDGQLKL (393 aa)) is adenylation 3. The 77-residue stretch at 2999–3075 (RPATAQEREM…QLMRHLSANG (77 aa)) folds into the Carrier 3 domain. An O-(pantetheine 4'-phosphoryl)serine modification is found at Ser3036. Condensation stretches follow at residues 3092 to 3557 (WVPL…TYDQ) and 3578 to 3997 (DIYP…EQLV). Positions 4022–4412 (HSSREAACAW…VGRKDNQIKF (391 aa)) are adenylation 4. Residues 4546-4622 (MPFTAAECKM…DLAYRTANLV (77 aa)) enclose the Carrier 4 domain. Ser4583 carries the post-translational modification O-(pantetheine 4'-phosphoryl)serine. Residues 4659 to 4972 (EVLPTTSFQR…LQTIVQHQNN (314 aa)) are condensation 5.

The protein belongs to the NRP synthetase family.

The protein operates within secondary metabolite biosynthesis. Its function is as follows. Nonribosomal peptide synthetase; part of the gene cluster that mediates the biosynthesis of malformins, cyclic pentapeptides with a disulfide bond between 2 consecutive cysteins, that show potential anti-tumor as well as antimalarial and antitrypanosomal properties. The nonribosomal peptide synthetase mlfA is responsible of the formation of the cyclic pentapeptide. The malformin biosynthesis clusters in malformin-producing fungi also contain enzymes involved in the formation of the disulfide bond between the two consecutive cysteins within malformins, in addition to additional tailoring enzymes such as methyltransferases or oxidoreductases. They are also composed of up to 4 major facilitator superfamily transporters, and transcription factors probably involved in the regulation of the expression of those clusters. In Aspergillus niger (strain ATCC MYA-4892 / CBS 513.88 / FGSC A1513), this protein is Malformin synthetase mlfA.